Here is an 86-residue protein sequence, read N- to C-terminus: Weak neurotoxin 9 (86 aa).

The N-terminal stretch at 1-21 (MKTLLLTLVVVTIVCLDLGYT) is a signal peptide. 5 disulfides stabilise this stretch: Cys-24–Cys-45, Cys-27–Cys-32, Cys-38–Cys-63, Cys-67–Cys-78, and Cys-79–Cys-84.

Belongs to the three-finger toxin family. Ancestral subfamily. Orphan group II sub-subfamily. As to expression, expressed by the venom gland.

It is found in the secreted. Binds with low affinity to muscular (alpha-1-beta-1-delta-epsilon/CHRNA1-CHRNB1-CHRND-CHRNE) and very low affinity to neuronal (alpha-7/CHRNA7) nicotinic acetylcholine receptor (nAChR). This chain is Weak neurotoxin 9, found in Naja sputatrix (Malayan spitting cobra).